We begin with the raw amino-acid sequence, 231 residues long: Protein HHL1, chloroplastic (231 aa).

The transit peptide at 1 to 39 (MEVSMSLNALTRLPLKNTGRFEEVGLARHSLFSSRTACR) directs the protein to the chloroplast. The chain crosses the membrane as a helical span at residues 93–113 (YLWYPLSIIAGGTTAKIMVAA). The tract at residues 206 to 231 (SFGKLSSLNPGSDEKTEETSDEKAKA) is disordered. Over residues 217–231 (SDEKTEETSDEKAKA) the composition is skewed to basic and acidic residues.

In terms of assembly, interacts with psbB, psbC and LQY1, but not with psbA or psbD.

It localises to the plastid. The protein resides in the chloroplast thylakoid membrane. Its function is as follows. Involved in photoprotection. Forms a complex with LQY1 that is involved in the repair and reassembly cycle of the PSII-LHCII supercomplex under high-light conditions. May function in guiding the release of psbC from PSII core monomers. The polypeptide is Protein HHL1, chloroplastic (Arabidopsis thaliana (Mouse-ear cress)).